The following is a 486-amino-acid chain: 2-hydroxymuconic semialdehyde dehydrogenase (486 aa).

Residues Glu-254 and Cys-288 contribute to the active site.

It belongs to the aldehyde dehydrogenase family.

The enzyme catalyses (2Z,4E)-2-hydroxy-6-oxohexa-2,4-dienoate + NAD(+) + H2O = (2Z,4E)-2-hydroxyhexa-2,4-dienedioate + NADH + 2 H(+). The protein operates within aromatic compound metabolism; benzoate degradation via hydroxylation. Its function is as follows. 2-hydroxymuconic acid semialdehyde can be converted to 2-hydroxypent-2,4-dienoate either directly by the action of 2-hydroxymuconic semialdehyde hydrolase (HMSH) or by the action of three sequential enzymes, the first of which is HMSD. This is 2-hydroxymuconic semialdehyde dehydrogenase (dmpC) from Pseudomonas sp. (strain CF600).